Reading from the N-terminus, the 696-residue chain is Polyphosphate kinase (696 aa).

N45 is a binding site for ATP. The Mg(2+) site is built by R373 and R403. The PLD phosphodiesterase domain occupies 428–462 (PGLKIHSKLLMISRREGDDIIRYAHIGTGNFHEKT). H433 serves as the catalytic Phosphohistidine intermediate. ATP-binding residues include Y466, R562, and H590.

The protein belongs to the polyphosphate kinase 1 (PPK1) family. Mg(2+) serves as cofactor. Post-translationally, an intermediate of this reaction is the autophosphorylated ppk in which a phosphate is covalently linked to a histidine residue through a N-P bond.

It carries out the reaction [phosphate](n) + ATP = [phosphate](n+1) + ADP. Its function is as follows. Catalyzes the reversible transfer of the terminal phosphate of ATP to form a long-chain polyphosphate (polyP). The chain is Polyphosphate kinase from Vibrio parahaemolyticus serotype O3:K6 (strain RIMD 2210633).